A 694-amino-acid polypeptide reads, in one-letter code: Polyribonucleotide nucleotidyltransferase (694 aa).

Residues aspartate 485 and aspartate 491 each coordinate Mg(2+). The KH domain maps to 552–611; it reads PRIETMQIKPNKIATVIGPGGKQIRQIIEEAGVQIDINDSGLVSISASSPQAIEKAKSMI. The S1 motif domain occupies 621 to 689; sequence GKIYEGRVTS…EKGQYKLSHK (69 aa).

It belongs to the polyribonucleotide nucleotidyltransferase family. Requires Mg(2+) as cofactor.

The protein resides in the cytoplasm. It catalyses the reaction RNA(n+1) + phosphate = RNA(n) + a ribonucleoside 5'-diphosphate. In terms of biological role, involved in mRNA degradation. Catalyzes the phosphorolysis of single-stranded polyribonucleotides processively in the 3'- to 5'-direction. The chain is Polyribonucleotide nucleotidyltransferase from Chlamydia caviae (strain ATCC VR-813 / DSM 19441 / 03DC25 / GPIC) (Chlamydophila caviae).